The chain runs to 631 residues: Eukaryotic translation initiation factor 3 subunit L (631 aa).

In terms of domain architecture, PCI spans 335–526 (TFVSVLIFFI…AETTLLDGER (192 aa)). The segment at 571–631 (KSAPLPVRKP…PKSRQARIAA (61 aa)) is disordered. The span at 580-612 (PASSSAPAPATTAAPISKSGESAAPAPAEAPAA) shows a compositional bias: low complexity.

Belongs to the eIF-3 subunit L family. Component of the eukaryotic translation initiation factor 3 (eIF-3) complex.

The protein resides in the cytoplasm. Its function is as follows. Component of the eukaryotic translation initiation factor 3 (eIF-3) complex, which is involved in protein synthesis of a specialized repertoire of mRNAs and, together with other initiation factors, stimulates binding of mRNA and methionyl-tRNAi to the 40S ribosome. The eIF-3 complex specifically targets and initiates translation of a subset of mRNAs involved in cell proliferation. This Cryptococcus neoformans var. neoformans serotype D (strain B-3501A) (Filobasidiella neoformans) protein is Eukaryotic translation initiation factor 3 subunit L.